The sequence spans 107 residues: UPF0145 protein BVU_2335 (107 aa).

This sequence belongs to the UPF0145 family.

The protein is UPF0145 protein BVU_2335 of Phocaeicola vulgatus (strain ATCC 8482 / DSM 1447 / JCM 5826 / CCUG 4940 / NBRC 14291 / NCTC 11154) (Bacteroides vulgatus).